A 228-amino-acid polypeptide reads, in one-letter code: MAWSTLVDPSPSVLTNPIPFPSGRGIVYVITDRRAAGERSLIDIVHAALRGGANAIQLRDKDVPARAMIALGEALLPLTRAAGVPLIVNDRVDVALALDADGVHVGQDDIPADMVRRIIGPARILGVSVATVEQAQQAARDGATYVSVGDLFGTPSKPDAGPPIGLTPLTEIARAVDLPVLGIGGITVANAASVVRAGAVGVAVISAVIGAPDPEAATRALCDVAAQR.

Residues 57–61 (QLRDK) and Asn89 each bind 4-amino-2-methyl-5-(diphosphooxymethyl)pyrimidine. Asp90 and Asp109 together coordinate Mg(2+). Ser128 provides a ligand contact to 4-amino-2-methyl-5-(diphosphooxymethyl)pyrimidine. Residue 154–156 (TPS) coordinates 2-[(2R,5Z)-2-carboxy-4-methylthiazol-5(2H)-ylidene]ethyl phosphate. A 4-amino-2-methyl-5-(diphosphooxymethyl)pyrimidine-binding site is contributed by Lys157. 2-[(2R,5Z)-2-carboxy-4-methylthiazol-5(2H)-ylidene]ethyl phosphate is bound by residues Gly185 and 205 to 206 (IS).

Belongs to the thiamine-phosphate synthase family. Requires Mg(2+) as cofactor.

It carries out the reaction 2-[(2R,5Z)-2-carboxy-4-methylthiazol-5(2H)-ylidene]ethyl phosphate + 4-amino-2-methyl-5-(diphosphooxymethyl)pyrimidine + 2 H(+) = thiamine phosphate + CO2 + diphosphate. The enzyme catalyses 2-(2-carboxy-4-methylthiazol-5-yl)ethyl phosphate + 4-amino-2-methyl-5-(diphosphooxymethyl)pyrimidine + 2 H(+) = thiamine phosphate + CO2 + diphosphate. It catalyses the reaction 4-methyl-5-(2-phosphooxyethyl)-thiazole + 4-amino-2-methyl-5-(diphosphooxymethyl)pyrimidine + H(+) = thiamine phosphate + diphosphate. Its pathway is cofactor biosynthesis; thiamine diphosphate biosynthesis; thiamine phosphate from 4-amino-2-methyl-5-diphosphomethylpyrimidine and 4-methyl-5-(2-phosphoethyl)-thiazole: step 1/1. Its function is as follows. Condenses 4-methyl-5-(beta-hydroxyethyl)thiazole monophosphate (THZ-P) and 2-methyl-4-amino-5-hydroxymethyl pyrimidine pyrophosphate (HMP-PP) to form thiamine monophosphate (TMP). The chain is Thiamine-phosphate synthase from Roseiflexus castenholzii (strain DSM 13941 / HLO8).